Reading from the N-terminus, the 404-residue chain is Cysteine desulfurase IscS (404 aa).

Pyridoxal 5'-phosphate is bound by residues 75–76, Asn155, Gln183, and 203–205; these read AT and SGH. The residue at position 206 (Lys206) is an N6-(pyridoxal phosphate)lysine. Thr243 serves as a coordination point for pyridoxal 5'-phosphate. The Cysteine persulfide intermediate role is filled by Cys328. Cys328 serves as a coordination point for [2Fe-2S] cluster.

The protein belongs to the class-V pyridoxal-phosphate-dependent aminotransferase family. NifS/IscS subfamily. Homodimer. Forms a heterotetramer with IscU, interacts with other sulfur acceptors. The cofactor is pyridoxal 5'-phosphate.

The protein resides in the cytoplasm. The enzyme catalyses (sulfur carrier)-H + L-cysteine = (sulfur carrier)-SH + L-alanine. Its pathway is cofactor biosynthesis; iron-sulfur cluster biosynthesis. Master enzyme that delivers sulfur to a number of partners involved in Fe-S cluster assembly, tRNA modification or cofactor biosynthesis. Catalyzes the removal of elemental sulfur atoms from cysteine to produce alanine. Functions as a sulfur delivery protein for Fe-S cluster synthesis onto IscU, an Fe-S scaffold assembly protein, as well as other S acceptor proteins. This Shewanella baltica (strain OS223) protein is Cysteine desulfurase IscS.